The chain runs to 1091 residues: Multiple epidermal growth factor-like domains protein 11 (1091 aa).

The N-terminal stretch at 1-18 (MAPSAVGLLVFLLQAALA) is a signal peptide. Residues 19–847 (LNPEDPNVCS…SPALGAERHS (829 aa)) are Extracellular-facing. Residues 23-100 (DPNVCSHWES…YYENGDFCIP (78 aa)) enclose the EMI domain. Cystine bridges form between cysteine 27–cysteine 88, cysteine 53–cysteine 62, cysteine 87–cysteine 98, cysteine 102–cysteine 117, cysteine 119–cysteine 128, cysteine 145–cysteine 153, cysteine 147–cysteine 160, cysteine 162–cysteine 171, cysteine 184–cysteine 196, cysteine 190–cysteine 203, cysteine 205–cysteine 214, cysteine 227–cysteine 239, cysteine 233–cysteine 246, and cysteine 248–cysteine 257. 9 EGF-like domains span residues 94–129 (NGDF…PDCS), 142–172 (SNRC…WRCE), 180–215 (HGKG…VYCE), 223–258 (HGAH…AVCA), 266–301 (FGQN…DRCQ), 314–344 (SQRC…PSCQ), 398–433 (YGNG…EVCA), 441–476 (YGPN…LDCS), and 484–519 (WGLN…DSCE). Asparagine 269 carries N-linked (GlcNAc...) asparagine glycosylation. Cystine bridges form between cysteine 270-cysteine 282, cysteine 276-cysteine 289, cysteine 291-cysteine 300, cysteine 317-cysteine 325, cysteine 319-cysteine 332, cysteine 334-cysteine 343, cysteine 402-cysteine 414, cysteine 408-cysteine 421, cysteine 423-cysteine 432, cysteine 445-cysteine 457, cysteine 451-cysteine 464, cysteine 466-cysteine 475, cysteine 488-cysteine 500, cysteine 494-cysteine 507, and cysteine 509-cysteine 518. A glycan (N-linked (GlcNAc...) asparagine) is linked at asparagine 530. 6 EGF-like domains span residues 570 to 605 (WGPN…PLCQ), 613 to 650 (YGHG…ALCN), 658 to 693 (FGQD…KDCS), 706 to 736 (FHTC…LFCT), 749 to 779 (GHIC…RHCE), and 787 to 822 (FGYG…IRCD). Disulfide bonds link cysteine 574-cysteine 586, cysteine 580-cysteine 593, cysteine 595-cysteine 604, cysteine 617-cysteine 631, cysteine 621-cysteine 638, cysteine 640-cysteine 649, cysteine 662-cysteine 674, cysteine 668-cysteine 681, cysteine 683-cysteine 692, cysteine 709-cysteine 717, cysteine 711-cysteine 724, cysteine 726-cysteine 735, cysteine 752-cysteine 760, cysteine 754-cysteine 767, cysteine 769-cysteine 778, cysteine 791-cysteine 803, cysteine 797-cysteine 810, and cysteine 812-cysteine 821. Residues 848 to 868 (VGAVTGIVLLLFLVVVLLGLF) form a helical membrane-spanning segment. Over 869–1091 (AWRRRRQKEK…NIYEVGRCLT (223 aa)) the chain is Cytoplasmic.

The protein belongs to the MEGF family. Homomer. Does not interact with MEGF10.

The protein resides in the cell membrane. The protein localises to the basolateral cell membrane. Functionally, may regulate the mosaic spacing of specific neuron subtypes in the retina through homotypic retinal neuron repulsion. Mosaics provide a mechanism to distribute each cell type evenly across the retina, ensuring that all parts of the visual field have access to a full set of processing elements. The protein is Multiple epidermal growth factor-like domains protein 11 (Megf11) of Mus musculus (Mouse).